Reading from the N-terminus, the 720-residue chain is MTAPKSTAPASTAATFRAIPVDDLSPAEAASEHKALAQEITGHDAAYYREDAPVVSDAEYDALRHRYEAIEERFPGLRGEDSLSEKVGAAPSEKFGKVAHKVPMLSLANCFSDEEVVEFVARVKRFLNLGPDDEVAFTCEPKIDGLSCSLHYENGRLTVAATRGDGSQGEDVTQNVRTIADIPERLAGKGVPQTIDVRGEVYMAKADFEALNARQAAAEEKVFANPRNAAAGSLRQLDSSITASRPLKFFAYAWGEASDLPAETQFGVVEAFARWGFTTNPLMVVAKDAAGLIAHYRSIEAQRALLGYDIDGVVYKVNSLELQRRLGFVSRSPRWAIAHKFPAEQATTVLEDIEIQVGRTGALTPVAKLTPVTVGGVVVSSATLHNEDEIARKDVRIGDTVVVQRAGDVIPQVVRVIEEKRPAGSKPYEFPTHCPACGSHAVREVDTKSGKVDAVRRCTGGLICPAQMVERLRHFVSRNAFDIEGLGEKQVRAFYEWGLIASPADIFTLETRNARSLQRLENRDGWGKTSAANLFAAIAERRTVAVDRFVFALGIRHVGETNAKRLMRHYGTVEALEAGALAAVIPGEEHPKGNEAWQEMIGIDGIGDVVAEAVIEFFGEPRNREVVTALLKEVTPEPMEQVAAASPVSGKTVVFTGSLEKMTRDEAKAMAERLGAKVAGSVSAKTNLVVAGPGAGSKLEKAQALGVQVITEDEWFELVG.

NAD(+) is bound by residues 57–61 (DAEYD), 106–107 (SL), and E140. The active-site N6-AMP-lysine intermediate is the K142. Positions 163, 200, 316, and 340 each coordinate NAD(+). The Zn(2+) site is built by C434, C437, C458, and C464. In terms of domain architecture, BRCT spans 643–720 (AAASPVSGKT…TEDEWFELVG (78 aa)).

The protein belongs to the NAD-dependent DNA ligase family. LigA subfamily. Mg(2+) serves as cofactor. The cofactor is Mn(2+).

It carries out the reaction NAD(+) + (deoxyribonucleotide)n-3'-hydroxyl + 5'-phospho-(deoxyribonucleotide)m = (deoxyribonucleotide)n+m + AMP + beta-nicotinamide D-nucleotide.. Functionally, DNA ligase that catalyzes the formation of phosphodiester linkages between 5'-phosphoryl and 3'-hydroxyl groups in double-stranded DNA using NAD as a coenzyme and as the energy source for the reaction. It is essential for DNA replication and repair of damaged DNA. The chain is DNA ligase from Xanthobacter autotrophicus (strain ATCC BAA-1158 / Py2).